We begin with the raw amino-acid sequence, 366 residues long: Ferrochelatase (366 aa).

2 residues coordinate Fe cation: H210 and E293.

This sequence belongs to the ferrochelatase family.

It localises to the cytoplasm. The enzyme catalyses heme b + 2 H(+) = protoporphyrin IX + Fe(2+). It participates in porphyrin-containing compound metabolism; protoheme biosynthesis; protoheme from protoporphyrin-IX: step 1/1. In terms of biological role, catalyzes the ferrous insertion into protoporphyrin IX. The protein is Ferrochelatase of Leptospira borgpetersenii serovar Hardjo-bovis (strain JB197).